The sequence spans 363 residues: Peptide chain release factor 2 (363 aa).

Q251 is modified (N5-methylglutamine).

This sequence belongs to the prokaryotic/mitochondrial release factor family. Methylated by PrmC. Methylation increases the termination efficiency of RF2.

Its subcellular location is the cytoplasm. Peptide chain release factor 2 directs the termination of translation in response to the peptide chain termination codons UGA and UAA. This chain is Peptide chain release factor 2, found in Helicobacter acinonychis (strain Sheeba).